The sequence spans 506 residues: bZIP transcription factor TGA10 (506 aa).

2 disordered regions span residues valine 22 to histidine 50 and proline 113 to arginine 218. Composition is skewed to polar residues over residues methionine 25–glycine 45, proline 113–glycine 124, proline 142–leucine 152, and serine 160–proline 180. Residues aspartate 207–threonine 216 show a composition bias toward basic and acidic residues. Positions aspartate 213–arginine 257 constitute a bZIP domain. The segment at lysine 215–lysine 235 is basic motif. The short motif at leucine 217–arginine 224 is the Nuclear localization signal element. Residues leucine 241 to leucine 255 form a leucine-zipper region. One can recognise a DOG1 domain in the interval alanine 288–arginine 502.

It belongs to the bZIP family. As to quaternary structure, binds DNA as a dimer. Interacts with TGA2.2. As to expression, specifically expressed in roots.

It is found in the nucleus. Its function is as follows. Transcription activator that binds to as1-like elements (5'-TGACGTAAgggaTGACGCA-3') in promoters of target genes. Regulates transcription in response to plant signaling molecules salicylic acid (SA), methyl jasmonate (MJ) and auxin (2,4D) only in leaves. Prevents lateral branching and may repress defense signaling. The polypeptide is bZIP transcription factor TGA10 (Nicotiana tabacum (Common tobacco)).